A 252-amino-acid chain; its full sequence is Phosphomannomutase (252 aa).

The active-site Nucleophile is Asp-13. The Mg(2+) site is built by Asp-13 and Asp-15. The active-site Proton donor/acceptor is the Asp-15. Alpha-D-mannose 1-phosphate is bound by residues Arg-22, Arg-124, Arg-135, Arg-142, Ser-180, and Asp-182. Residues Asp-208, Tyr-220, and Thr-225 each coordinate Mg(2+).

It belongs to the eukaryotic PMM family. Homodimer. The cofactor is Mg(2+). As to expression, expressed in roots, leaves, stems and flowers.

It localises to the cytoplasm. It catalyses the reaction alpha-D-mannose 1-phosphate = D-mannose 6-phosphate. Its pathway is nucleotide-sugar biosynthesis; GDP-alpha-D-mannose biosynthesis; alpha-D-mannose 1-phosphate from D-fructose 6-phosphate: step 2/2. Catalyzes the interconversion of mannose-6-phosphate to mannose-1-phosphate, the precursor for the synthesis of GDP-mannose. GDP-mannose is an essential sugar nucleotide for the synthesis of D-mannose-containing cell wall polysaccharides (galactomannans and glucomannans), glycolipids, glycoproteins and the antioxidant L-ascorbate. Involved in the biosynthesis of ascorbate and polysaccharides in response to abiotic stress during seed germination. In Dendrobium officinale (Orchid), this protein is Phosphomannomutase.